Consider the following 743-residue polypeptide: DNA ligase 2 (743 aa).

Residues 45 to 49, 94 to 95, and Glu125 contribute to the NAD(+) site; these read DADFD and SL. Lys127 serves as the catalytic N6-AMP-lysine intermediate. 4 residues coordinate NAD(+): Arg148, Glu185, Lys301, and Lys325. Residues Cys419, Cys422, Cys438, and Cys444 each coordinate Zn(2+). A BRCT domain is found at 639–728; it reads EGPRPLEGLT…PERAKEAALP (90 aa). The interval 720 to 743 is disordered; it reads ERAKEAALPVPEAAPAADPENSGE. Positions 725 to 743 are enriched in low complexity; that stretch reads AALPVPEAAPAADPENSGE.

The protein belongs to the NAD-dependent DNA ligase family. LigA subfamily. The cofactor is Mg(2+). Mn(2+) serves as cofactor.

It catalyses the reaction NAD(+) + (deoxyribonucleotide)n-3'-hydroxyl + 5'-phospho-(deoxyribonucleotide)m = (deoxyribonucleotide)n+m + AMP + beta-nicotinamide D-nucleotide.. DNA ligase that catalyzes the formation of phosphodiester linkages between 5'-phosphoryl and 3'-hydroxyl groups in double-stranded DNA using NAD as a coenzyme and as the energy source for the reaction. It is essential for DNA replication and repair of damaged DNA. The protein is DNA ligase 2 of Streptomyces griseus subsp. griseus (strain JCM 4626 / CBS 651.72 / NBRC 13350 / KCC S-0626 / ISP 5235).